The sequence spans 302 residues: Potassium/proton antiporter CemA (302 aa).

The next 4 helical transmembrane spans lie at Val55 to Leu75, Phe187 to Leu207, Phe225 to Leu247, and Phe262 to Ile282.

Belongs to the CemA family.

It localises to the plastid. The protein resides in the chloroplast inner membrane. The catalysed reaction is K(+)(in) + H(+)(out) = K(+)(out) + H(+)(in). Contributes to K(+)/H(+) antiport activity by supporting proton efflux to control proton extrusion and homeostasis in chloroplasts in a light-dependent manner to modulate photosynthesis. Prevents excessive induction of non-photochemical quenching (NPQ) under continuous-light conditions. Indirectly promotes efficient inorganic carbon uptake into chloroplasts. The sequence is that of Potassium/proton antiporter CemA from Tupiella akineta (Green alga).